The primary structure comprises 226 residues: Protein TRI1 (226 aa).

The 56-residue stretch at 1–56 (MADINKYIPMVDAILSVSNPDEISPKRVRKALQILYSVNLDSQRKLINELILERFG) folds into the DEK-C domain. A disordered region spans residues 83-118 (QKEEERPLRSTRKRKGKSESKSKRKKKKNDSPDSNS). The segment covering 91 to 110 (RSTRKRKGKSESKSKRKKKK) has biased composition (basic residues). Residue serine 113 is modified to Phosphoserine. Residues 119–195 (ISVRKVLLSA…NKLLTKHLFN (77 aa)) form the SWIB/MDM2 domain. Over residues 200–218 (VKHEEEQKQTPEKEIKLEN) the composition is skewed to basic and acidic residues. The tract at residues 200–226 (VKHEEEQKQTPEKEIKLENESLPNLSG) is disordered. Glycyl lysine isopeptide (Lys-Gly) (interchain with G-Cter in SUMO) cross-links involve residues lysine 201 and lysine 215. Serine 225 bears the Phosphoserine mark.

The protein localises to the cytoplasm. The protein resides in the nucleus. It is found in the nucleolus. May be involved in transcription regulation. This Saccharomyces cerevisiae (strain ATCC 204508 / S288c) (Baker's yeast) protein is Protein TRI1 (TRI1).